The chain runs to 157 residues: Crossover junction endodeoxyribonuclease RuvC (157 aa).

Residues D7, E66, and D139 contribute to the active site. 3 residues coordinate Mg(2+): D7, E66, and D139.

The protein belongs to the RuvC family. In terms of assembly, homodimer which binds Holliday junction (HJ) DNA. The HJ becomes 2-fold symmetrical on binding to RuvC with unstacked arms; it has a different conformation from HJ DNA in complex with RuvA. In the full resolvosome a probable DNA-RuvA(4)-RuvB(12)-RuvC(2) complex forms which resolves the HJ. Mg(2+) serves as cofactor.

The protein localises to the cytoplasm. The enzyme catalyses Endonucleolytic cleavage at a junction such as a reciprocal single-stranded crossover between two homologous DNA duplexes (Holliday junction).. The RuvA-RuvB-RuvC complex processes Holliday junction (HJ) DNA during genetic recombination and DNA repair. Endonuclease that resolves HJ intermediates. Cleaves cruciform DNA by making single-stranded nicks across the HJ at symmetrical positions within the homologous arms, yielding a 5'-phosphate and a 3'-hydroxyl group; requires a central core of homology in the junction. The consensus cleavage sequence is 5'-(A/T)TT(C/G)-3'. Cleavage occurs on the 3'-side of the TT dinucleotide at the point of strand exchange. HJ branch migration catalyzed by RuvA-RuvB allows RuvC to scan DNA until it finds its consensus sequence, where it cleaves and resolves the cruciform DNA. The polypeptide is Crossover junction endodeoxyribonuclease RuvC (Helicobacter pylori (strain P12)).